A 306-amino-acid polypeptide reads, in one-letter code: Agmatinase (306 aa).

Mn(2+)-binding residues include His126, Asp149, His151, Asp153, Asp230, and Asp232.

The protein belongs to the arginase family. Agmatinase subfamily. It depends on Mn(2+) as a cofactor.

The enzyme catalyses agmatine + H2O = urea + putrescine. Its pathway is amine and polyamine biosynthesis; putrescine biosynthesis via agmatine pathway; putrescine from agmatine: step 1/1. Catalyzes the formation of putrescine from agmatine. This chain is Agmatinase, found in Shigella dysenteriae serotype 1 (strain Sd197).